The chain runs to 396 residues: Flavohemoprotein (396 aa).

Positions 1–136 (MLDNHTIAIV…LANVFIQRED (136 aa)) constitute a Globin domain. Residue His-85 participates in heme b binding. Residues Tyr-95 and Glu-135 each act as charge relay system in the active site. The tract at residues 147 to 396 (GGWSGVRPFR…YECFGPHKVV (250 aa)) is reductase. Residues 150 to 255 (SGVRPFRIVN…AAPHGDFFLD (106 aa)) enclose the FAD-binding FR-type domain. Residues Tyr-188 and 204 to 207 (RQYS) contribute to the FAD site. Residue 268 to 273 (GVGQTP) participates in NADP(+) binding. 389–392 (CFGP) contributes to the FAD binding site.

This sequence belongs to the globin family. Two-domain flavohemoproteins subfamily. It in the C-terminal section; belongs to the flavoprotein pyridine nucleotide cytochrome reductase family. The cofactor is heme b. Requires FAD as cofactor.

It catalyses the reaction 2 nitric oxide + NADPH + 2 O2 = 2 nitrate + NADP(+) + H(+). The enzyme catalyses 2 nitric oxide + NADH + 2 O2 = 2 nitrate + NAD(+) + H(+). Functionally, is involved in NO detoxification in an aerobic process, termed nitric oxide dioxygenase (NOD) reaction that utilizes O(2) and NAD(P)H to convert NO to nitrate, which protects the bacterium from various noxious nitrogen compounds. Therefore, plays a central role in the inducible response to nitrosative stress. This is Flavohemoprotein from Pectobacterium atrosepticum (strain SCRI 1043 / ATCC BAA-672) (Erwinia carotovora subsp. atroseptica).